Consider the following 221-residue polypeptide: Sugar transporter SWEET1 (221 aa).

Helical transmembrane passes span 3 to 23 (AGGF…LGMF), 42 to 62 (VQFL…SYGA), 68 to 88 (ILIV…LAYL), 96 to 116 (VVLL…GYFW), 126 to 146 (LQLL…SPLA), 160 to 180 (LSYP…LYGF), and 186 to 206 (YIMV…WLFW). Residues 10–94 (LIYGACVVFT…LAYLHYCPRK (85 aa)) enclose the MtN3/slv 1 domain. The 86-residue stretch at 127–212 (QLLGLFCSVF…WLFWKYPQEQ (86 aa)) folds into the MtN3/slv 2 domain. Residues 149-221 (AKVIQTKSTQ…QDRNYWFLQT (73 aa)) are mediates interaction with TRPV2.

It belongs to the SWEET sugar transporter family. As to quaternary structure, interacts with TRPV2; the interaction probably occurs intracellularly and depends on TRPV2 N-glycosylation.

The protein resides in the golgi apparatus membrane. It is found in the cell membrane. In terms of biological role, mediates sugar transport across membranes. May stimulate V(D)J recombination by the activation of RAG1. The protein is Sugar transporter SWEET1 (SLC50A1) of Papio anubis (Olive baboon).